A 308-amino-acid chain; its full sequence is Aspartate carbamoyltransferase catalytic subunit (308 aa).

The carbamoyl phosphate site is built by arginine 57 and threonine 58. Lysine 86 is a binding site for L-aspartate. Positions 107, 135, and 138 each coordinate carbamoyl phosphate. L-aspartate contacts are provided by arginine 168 and arginine 229. Carbamoyl phosphate contacts are provided by leucine 268 and proline 269.

Belongs to the aspartate/ornithine carbamoyltransferase superfamily. ATCase family. In terms of assembly, heterooligomer of catalytic and regulatory chains.

It carries out the reaction carbamoyl phosphate + L-aspartate = N-carbamoyl-L-aspartate + phosphate + H(+). The protein operates within pyrimidine metabolism; UMP biosynthesis via de novo pathway; (S)-dihydroorotate from bicarbonate: step 2/3. In terms of biological role, catalyzes the condensation of carbamoyl phosphate and aspartate to form carbamoyl aspartate and inorganic phosphate, the committed step in the de novo pyrimidine nucleotide biosynthesis pathway. This is Aspartate carbamoyltransferase catalytic subunit from Thermococcus gammatolerans (strain DSM 15229 / JCM 11827 / EJ3).